Here is a 493-residue protein sequence, read N- to C-terminus: Glutamate synthase [NADPH] small chain (493 aa).

299–313 contacts NADP(+); sequence GGGDTGADCVATALR.

The protein belongs to the glutamate synthase family. In terms of assembly, aggregate of 4 catalytic active heterodimers, consisting of a large and a small subunit.

It carries out the reaction 2 L-glutamate + NADP(+) = L-glutamine + 2-oxoglutarate + NADPH + H(+). Its pathway is amino-acid biosynthesis; L-glutamate biosynthesis via GLT pathway; L-glutamate from 2-oxoglutarate and L-glutamine (NADP(+) route): step 1/1. The protein operates within energy metabolism; nitrogen metabolism. This Bacillus subtilis (strain 168) protein is Glutamate synthase [NADPH] small chain (gltB).